Here is a 691-residue protein sequence, read N- to C-terminus: Proprotein convertase subtilisin/kexin type 9 (691 aa).

The first 30 residues, 1–30 (MGIRCSTWLRWPLSPQLLLLLLLCPTGSRA), serve as a signal peptide directing secretion. A propeptide spanning residues 31-151 (QDEDGDYEEL…IEEDSLVFAQ (121 aa)) is cleaved from the precursor. The residue at position 37 (Y37) is a Sulfotyrosine. Phosphoserine is present on S46. The Peptidase S8 domain maps to 154 to 441 (PWNLERIIPA…QRVLTPNRVA (288 aa)). Active-site charge relay system residues include D185 and H225. 2 cysteine pairs are disulfide-bonded: C222/C254 and C322/C357. Catalysis depends on S385, which acts as the Charge relay system. The tract at residues 449 to 691 (ETGGQLLCRT…PSAKASWVHQ (243 aa)) is C-terminal domain. Intrachain disulfides connect C456-C526, C476-C525, and C485-C508. The Cell attachment site motif lies at 495–497 (RGD). Residue N532 is glycosylated (N-linked (GlcNAc...) asparagine). Disulfide bonds link C533–C600, C551–C599, C561–C587, C607–C678, C625–C677, and C634–C653. S687 bears the Phosphoserine mark.

This sequence belongs to the peptidase S8 family. Monomer. Can self-associate to form dimers and higher multimers which may have increased LDLR degrading activity. The precursor protein but not the mature protein may form multimers. Interacts with APOB, VLDLR, LRP8/APOER2 and BACE1. The full-length immature form (pro-PCSK9) interacts with SCNN1A, SCNN1B and SCNN1G. The pro-PCSK9 form (via C-terminal domain) interacts with LDLR. Interacts (via the C-terminal domain) with ANXA2 (via repeat Annexin 1); the interaction inhibits the degradation of LDLR. It depends on Ca(2+) as a cofactor. In terms of processing, cleavage by furin and PCSK5 generates a truncated inactive protein that is unable to induce LDLR degradation. Post-translationally, undergoes autocatalytic cleavage in the endoplasmic reticulum to release the propeptide from the N-terminus and the cleavage of the propeptide is strictly required for its maturation and activation. The cleaved propeptide however remains associated with the catalytic domain through non-covalent interactions, preventing potential substrates from accessing its active site. As a result, it is secreted from cells as a propeptide-containing, enzymatically inactive protein. Phosphorylation protects the propeptide against proteolysis. As to expression, highly expressed in 12-day embryo. In the adult, strongly expressed in liver, small intestine, jejunum, and to a lesser extent in kidney, lung, spleen and thymus. Expression in the liver is up-regulated following partial hepatectomy.

The protein localises to the cytoplasm. It is found in the secreted. The protein resides in the endosome. Its subcellular location is the lysosome. It localises to the cell surface. The protein localises to the endoplasmic reticulum. It is found in the golgi apparatus. Its proteolytic activity is autoinhibited by the non-covalent binding of the propeptide to the catalytic domain. Inhibited by EGTA. In terms of biological role, crucial player in the regulation of plasma cholesterol homeostasis. Binds to low-density lipid receptor family members: low density lipoprotein receptor (LDLR), very low density lipoprotein receptor (VLDLR), apolipoprotein E receptor (LRP1/APOER) and apolipoprotein receptor 2 (LRP8/APOER2), and promotes their degradation in intracellular acidic compartments. Acts via a non-proteolytic mechanism to enhance the degradation of the hepatic LDLR through a clathrin LDLRAP1/ARH-mediated pathway. May prevent the recycling of LDLR from endosomes to the cell surface or direct it to lysosomes for degradation. Can induce ubiquitination of LDLR leading to its subsequent degradation. Inhibits intracellular degradation of APOB via the autophagosome/lysosome pathway in a LDLR-independent manner. Involved in the disposal of non-acetylated intermediates of BACE1 in the early secretory pathway. Inhibits epithelial Na(+) channel (ENaC)-mediated Na(+) absorption by reducing ENaC surface expression primarily by increasing its proteasomal degradation. Regulates neuronal apoptosis via modulation of LRP8/APOER2 levels and related anti-apoptotic signaling pathways. This chain is Proprotein convertase subtilisin/kexin type 9 (Pcsk9), found in Rattus norvegicus (Rat).